An 89-amino-acid chain; its full sequence is MTEQIEKVRRALVGRVVSDKMQNTVTVLVERRVKHELYGKVITRSAKYHAHVEDGGAAAGDLVEIEECRPISKTKSWRVAKVLEKARVI.

It belongs to the universal ribosomal protein uS17 family. As to quaternary structure, part of the 30S ribosomal subunit.

One of the primary rRNA binding proteins, it binds specifically to the 5'-end of 16S ribosomal RNA. This is Small ribosomal subunit protein uS17 from Aromatoleum aromaticum (strain DSM 19018 / LMG 30748 / EbN1) (Azoarcus sp. (strain EbN1)).